A 421-amino-acid polypeptide reads, in one-letter code: Imidazolonepropionase (421 aa).

Fe(3+)-binding residues include histidine 80 and histidine 82. Residues histidine 80 and histidine 82 each coordinate Zn(2+). Residues arginine 89, tyrosine 152, and histidine 185 each contribute to the 4-imidazolone-5-propanoate site. An N-formimidoyl-L-glutamate-binding site is contributed by tyrosine 152. Histidine 249 provides a ligand contact to Fe(3+). Histidine 249 lines the Zn(2+) pocket. Residue glutamate 252 participates in 4-imidazolone-5-propanoate binding. Aspartate 324 is a binding site for Fe(3+). Residue aspartate 324 coordinates Zn(2+). N-formimidoyl-L-glutamate-binding residues include asparagine 326 and glycine 328. A 4-imidazolone-5-propanoate-binding site is contributed by serine 329.

It belongs to the metallo-dependent hydrolases superfamily. HutI family. Homodimer. Zn(2+) is required as a cofactor. The cofactor is Fe(3+).

It is found in the cytoplasm. The catalysed reaction is 4-imidazolone-5-propanoate + H2O = N-formimidoyl-L-glutamate. Its pathway is amino-acid degradation; L-histidine degradation into L-glutamate; N-formimidoyl-L-glutamate from L-histidine: step 3/3. Catalyzes the hydrolytic cleavage of the carbon-nitrogen bond in imidazolone-5-propanoate to yield N-formimidoyl-L-glutamate. It is the third step in the universal histidine degradation pathway. This Bacillus subtilis (strain 168) protein is Imidazolonepropionase.